Consider the following 942-residue polypeptide: Mitogen-activated protein kinase kinase kinase 14 (942 aa).

The span at 136-152 (GKRHGKARKKRRKKRSK) shows a compositional bias: basic residues. Disordered regions lie at residues 136–156 (GKRH…SLAQ) and 291–326 (VSGQ…SCPS). The 256-residue stretch at 402-657 (MTHQPRVGRG…ELRRKVGKAL (256 aa)) folds into the Protein kinase domain. The segment at 403 to 655 (THQPRVGRGS…AMELRRKVGK (253 aa)) is interaction with ZFP91. ATP is bound by residues 408 to 416 (VGRGSFGEV) and Lys-431. The Proton acceptor role is filled by Asp-517. The residue at position 561 (Thr-561) is a Phosphothreonine. 2 disordered regions span residues 660-756 (VGGL…FPDR) and 801-823 (SDDS…SSGV). The span at 707 to 720 (EPQPPLPPEPPEPS) shows a compositional bias: pro residues. Positions 809–823 (SKASQSSRDTLSSGV) are enriched in polar residues.

Belongs to the protein kinase superfamily. STE Ser/Thr protein kinase family. MAP kinase kinase kinase subfamily. As to quaternary structure, interacts with TRAF2, TRAF3, TRAF5, TRAF6, IKKA and NF-kappa-B2/P100. Interacts with PELI3. Interacts with NIBP; the interaction is direct. Interacts with ARRB1 and ARRB2. Interacts with GRB10. Interacts with ZFP91. Interacts with NLRP12; this interaction promotes proteasomal degradation of MAP3K14. Directly interacts with DDX3X. Interacts (via C-terminus and kinase domain) with PPPC3A (via N-terminus) and PPP3CB. Phosphorylation at Thr-561 is required to activate its kinase activity and 'Lys-63'-linked polyubiquitination. Phosphorylated by CHUK/IKKA leading to MAP3K14 destabilization. Autophosphorylated. Post-translationally, ubiquitinated. Undergoes both 'Lys-48'- and 'Lys-63'-linked polyubiquitination. 'Lys-48'-linked polyubiquitination leads to its degradation by the proteasome, while 'Lys-63'-linked polyubiquitination stabilizes and activates it.

Its subcellular location is the cytoplasm. It carries out the reaction L-seryl-[protein] + ATP = O-phospho-L-seryl-[protein] + ADP + H(+). The catalysed reaction is L-threonyl-[protein] + ATP = O-phospho-L-threonyl-[protein] + ADP + H(+). Functionally, lymphotoxin beta-activated kinase which seems to be exclusively involved in the activation of NF-kappa-B and its transcriptional activity. Phosphorylates CHUK/IKKA. Promotes proteolytic processing of NFKB2/P100, which leads to activation of NF-kappa-B via the non-canonical pathway. Has an essential role in the non-canonical NF-kappa-B signalining that regulates genes encoding molecules involved in B-cell survival, lymphoid organogenesis, and immune response. Could act in a receptor-selective manner. The sequence is that of Mitogen-activated protein kinase kinase kinase 14 from Mus musculus (Mouse).